The chain runs to 368 residues: Quinolinate synthase (368 aa).

Iminosuccinate-binding residues include His46 and Ser63. [4Fe-4S] cluster is bound at residue Cys110. Iminosuccinate contacts are provided by residues Tyr141–Asn143 and Ser162. Residue Cys230 participates in [4Fe-4S] cluster binding. Iminosuccinate contacts are provided by residues His256 to Glu258 and Thr273. Residue Cys320 coordinates [4Fe-4S] cluster.

It belongs to the quinolinate synthase family. Type 3 subfamily. The cofactor is [4Fe-4S] cluster.

The protein resides in the cytoplasm. The catalysed reaction is iminosuccinate + dihydroxyacetone phosphate = quinolinate + phosphate + 2 H2O + H(+). The protein operates within cofactor biosynthesis; NAD(+) biosynthesis; quinolinate from iminoaspartate: step 1/1. Catalyzes the condensation of iminoaspartate with dihydroxyacetone phosphate to form quinolinate. The polypeptide is Quinolinate synthase (Bacillus cereus (strain ATCC 14579 / DSM 31 / CCUG 7414 / JCM 2152 / NBRC 15305 / NCIMB 9373 / NCTC 2599 / NRRL B-3711)).